The primary structure comprises 283 residues: NAD(P)H-hydrate epimerase (283 aa).

The transit peptide at 1–28 directs the protein to the mitochondrion; sequence MLGVRALFGIGLLVTSRGGFVLTHTRAC. Residues 61-270 form the YjeF N-terminal domain; sequence AQQIDEELFS…VLEQKYQLNL (210 aa). 115-119 serves as a coordination point for (6S)-NADPHX; sequence NNGGD. Residues N116 and D180 each contribute to the K(+) site. (6S)-NADPHX is bound by residues 184-190 and D213; that span reads GFSFKGA. S216 is a binding site for K(+).

Belongs to the NnrE/AIBP family. In terms of assembly, homodimer. Interacts with apoa1a. Binds to high-density lipoprotein. K(+) is required as a cofactor.

Its subcellular location is the mitochondrion. It localises to the secreted. The enzyme catalyses (6R)-NADHX = (6S)-NADHX. The catalysed reaction is (6R)-NADPHX = (6S)-NADPHX. In terms of biological role, catalyzes the epimerization of the S- and R-forms of NAD(P)HX, a damaged form of NAD(P)H that is a result of enzymatic or heat-dependent hydration. This is a prerequisite for the S-specific NAD(P)H-hydrate dehydratase to allow the repair of both epimers of NAD(P)HX. The sequence is that of NAD(P)H-hydrate epimerase from Danio rerio (Zebrafish).